We begin with the raw amino-acid sequence, 290 residues long: Elongation factor Ts (290 aa).

The involved in Mg(2+) ion dislocation from EF-Tu stretch occupies residues 79–82 (TDFV).

It belongs to the EF-Ts family.

It localises to the cytoplasm. Functionally, associates with the EF-Tu.GDP complex and induces the exchange of GDP to GTP. It remains bound to the aminoacyl-tRNA.EF-Tu.GTP complex up to the GTP hydrolysis stage on the ribosome. The protein is Elongation factor Ts of Pseudoalteromonas atlantica (strain T6c / ATCC BAA-1087).